Here is a 345-residue protein sequence, read N- to C-terminus: MAKEIENLWREVRELSLGTKIDRFDSQPSPVKFLRNYVSQSKPCVISKAITHWPALKLWSDPAYLTGALSDDVVSLHLTPNGCADAVTGDSDLCFASAHVEKVLFPEALKVVQSSCKGLKVGYLQQQNDCFRTEYSTVALDCDGDIEWATEAFGCSPEAVNLWIGTDDSVTSFHKDHYENLYAVVSGEKHFLLLPPTDVHRLYIEQYPAANYSYHRDTDAFKLEVEEPVRHVPWSSVDPYPSPEKEASERLKFPLFFDGPKPFHCTVKAGEVLYLPSMWFHHVSQTPGDGGYTIAVNYWYDMQFDIKYAYFNFLQSLLYKSSSLNPVLSWREDEDSESSDAEIAP.

A JmjC domain is found at Gly122–Gln315. Residues His174, Asp176, and His281 each contribute to the Fe cation site.

This sequence belongs to the JARID1 histone demethylase family. It depends on Fe(2+) as a cofactor. As to expression, expressed ubiquitously including in vasculatures, leaves, siliques, roots and inflorescences. Present in the root meristem. Accumulates in cotyledons and root tips of young seedlings.

It localises to the nucleus. The protein resides in the cytoplasm. The protein localises to the endoplasmic reticulum. It carries out the reaction N(6),N(6),N(6)-trimethyl-L-lysyl(27)-[histone H3] + 2-oxoglutarate + O2 = N(6),N(6)-dimethyl-L-lysyl(27)-[histone H3] + formaldehyde + succinate + CO2. It catalyses the reaction N(6),N(6)-dimethyl-L-lysyl(27)-[histone H3] + 2-oxoglutarate + O2 = N(6)-methyl-L-lysyl(27)-[histone H3] + formaldehyde + succinate + CO2. The catalysed reaction is N(6),N(6),N(6)-trimethyl-L-lysyl(27)-[histone H3] + 2 2-oxoglutarate + 2 O2 = N(6)-methyl-L-lysyl(27)-[histone H3] + 2 formaldehyde + 2 succinate + 2 CO2. In terms of biological role, histone demethylase that demethylates 'Lys-27' (H3K27me) of histone H3 with a specific activity for H3K27me3 and H3K27me2, and involved in the regulation of gene expression. No activity on H3K27me1. Together with JMJ30, regulates the flowering-repressor FLOWERING LOCUS C (FLC) locus by removing the repressive histone modification H3 lysine 27 trimethylation (H3K27me3), especially at elevated temperatures (e.g. 29 degrees Celsius), thus preventing extreme precocious flowering. JMJ30 and JMJ32 are regulators involved in the integration of abscisic acid (ABA) and brassinosteroids (BR) signaling pathways. Together with JMJ30, controls ABA-mediated growth arrest during the post-germination stage in unfavorable conditions, and responses to ABA during root development, via the removal of repressive histone mark (H3K27me3) from the SnRK2.8 promoter, thus promoting SnRK2.8 expression and subsequent kinase-dependent ABI3 activation. In addition, removes the repressive histone marks (H3K27me3) from the BZR1 locus in response to stress and ABA, thus activating the BR signaling pathway which, in turn, inhibits the ABA signaling pathway. The sequence is that of Lysine-specific demethylase JMJ32 from Arabidopsis thaliana (Mouse-ear cress).